Here is a 212-residue protein sequence, read N- to C-terminus: Large ribosomal subunit protein uL3 (212 aa).

A disordered region spans residues 127-161 (NFKRGPMAHGSKNHRLPGSTGAGTTPGRVFPGKRM).

Belongs to the universal ribosomal protein uL3 family. As to quaternary structure, part of the 50S ribosomal subunit. Forms a cluster with proteins L14 and L19.

One of the primary rRNA binding proteins, it binds directly near the 3'-end of the 23S rRNA, where it nucleates assembly of the 50S subunit. This is Large ribosomal subunit protein uL3 from Thermosynechococcus vestitus (strain NIES-2133 / IAM M-273 / BP-1).